The sequence spans 627 residues: 1-deoxy-D-xylulose-5-phosphate synthase (627 aa).

Thiamine diphosphate contacts are provided by residues H87 and 128–130; that span reads GHS. Mg(2+) is bound at residue D159. Residues 160–161, N188, F295, and E375 each bind thiamine diphosphate; that span reads GA. Position 188 (N188) interacts with Mg(2+).

The protein belongs to the transketolase family. DXPS subfamily. Homodimer. It depends on Mg(2+) as a cofactor. Thiamine diphosphate is required as a cofactor.

The catalysed reaction is D-glyceraldehyde 3-phosphate + pyruvate + H(+) = 1-deoxy-D-xylulose 5-phosphate + CO2. The protein operates within metabolic intermediate biosynthesis; 1-deoxy-D-xylulose 5-phosphate biosynthesis; 1-deoxy-D-xylulose 5-phosphate from D-glyceraldehyde 3-phosphate and pyruvate: step 1/1. Functionally, catalyzes the acyloin condensation reaction between C atoms 2 and 3 of pyruvate and glyceraldehyde 3-phosphate to yield 1-deoxy-D-xylulose-5-phosphate (DXP). This chain is 1-deoxy-D-xylulose-5-phosphate synthase, found in Pseudomonas aeruginosa (strain LESB58).